The primary structure comprises 212 residues: Pyridoxine/pyridoxamine 5'-phosphate oxidase (212 aa).

Substrate contacts are provided by residues 8–11 (RREY) and Lys-66. Residues 61 to 66 (RIVLLK), 76 to 77 (FT), Arg-82, Lys-83, and Gln-105 contribute to the FMN site. 3 residues coordinate substrate: Tyr-123, Arg-127, and Ser-131. Residues 140-141 (QS) and Trp-185 each bind FMN. 191–193 (RLH) contributes to the substrate binding site. Arg-195 provides a ligand contact to FMN.

Belongs to the pyridoxamine 5'-phosphate oxidase family. Homodimer. Requires FMN as cofactor.

The enzyme catalyses pyridoxamine 5'-phosphate + O2 + H2O = pyridoxal 5'-phosphate + H2O2 + NH4(+). It catalyses the reaction pyridoxine 5'-phosphate + O2 = pyridoxal 5'-phosphate + H2O2. Its pathway is cofactor metabolism; pyridoxal 5'-phosphate salvage; pyridoxal 5'-phosphate from pyridoxamine 5'-phosphate: step 1/1. The protein operates within cofactor metabolism; pyridoxal 5'-phosphate salvage; pyridoxal 5'-phosphate from pyridoxine 5'-phosphate: step 1/1. Catalyzes the oxidation of either pyridoxine 5'-phosphate (PNP) or pyridoxamine 5'-phosphate (PMP) into pyridoxal 5'-phosphate (PLP). This is Pyridoxine/pyridoxamine 5'-phosphate oxidase from Shewanella oneidensis (strain ATCC 700550 / JCM 31522 / CIP 106686 / LMG 19005 / NCIMB 14063 / MR-1).